Here is a 183-residue protein sequence, read N- to C-terminus: Oligoribonuclease (183 aa).

In terms of domain architecture, Exonuclease spans 9 to 172 (LIWIDLEMTG…DDIRESIEEL (164 aa)). Residue tyrosine 130 is part of the active site.

It belongs to the oligoribonuclease family.

Its subcellular location is the cytoplasm. Its function is as follows. 3'-to-5' exoribonuclease specific for small oligoribonucleotides. In Haemophilus ducreyi (strain 35000HP / ATCC 700724), this protein is Oligoribonuclease.